Here is a 408-residue protein sequence, read N- to C-terminus: Sprouty-related, EVH1 domain-containing protein 3 (408 aa).

Residues 1–113 (MVRVRAVVMA…KSLLAALAAL (113 aa)) form the WH1 domain. Residues 118 to 226 (LTPSSSSSSS…YEDYRRSGPP (109 aa)) form a disordered region. Residues 120–130 (PSSSSSSSSPS) show a composition bias toward low complexity. The KBD domain maps to 192 to 242 (LPFTGIPEPSESLAGAGSQGWGSRGYEDYRRSGPPPPPLALSTCVVRFAKT). R238 bears the Asymmetric dimethylarginine mark. Omega-N-methylarginine is present on R246. The tract at residues 256 to 286 (LPAPLTEAAPPAPPARPPPGPGPTPAPAKAS) is disordered. Residues 265-281 (PPAPPARPPPGPGPTPA) show a composition bias toward pro residues. The SPR domain occupies 294 to 405 (RCVHCRALFR…CAGCGGRHEE (112 aa)).

Interacts with palmitoyltransferase ZDHHC17/HIP14; the interaction leads to palmitoylation of SPRED3. Phosphorylated on tyrosine. In terms of processing, palmitoylated by ZDHHC17/HIP14. Post-translationally, ubiquitinated. Brain specific.

The protein localises to the cell membrane. Its function is as follows. Tyrosine kinase substrate that inhibits growth-factor-mediated activation of MAP kinase. Inhibits fibroblast growth factor (FGF)-induced retinal lens fiber differentiation, probably by inhibiting FGF-mediated phosphorylation of ERK1/2. Inhibits TGFB-induced epithelial-to-mesenchymal transition in lens epithelial cells. This Mus musculus (Mouse) protein is Sprouty-related, EVH1 domain-containing protein 3 (Spred3).